The primary structure comprises 195 residues: MPYGTRYPTLAFHTGGVGESDDGMPPQPFETFCYDSALLQAKIENFNIVPYTSVLPKELFGNILPVDQCTKFFKHGAVLEVIMAGRGATVTDGTQAIATGVGICWGKDKNGELIGGWAAEYVEFFPTWIDDEIAESHAKMWLKKSLQHELDLRSVSKHSEFQYFHNYINIRKKFGFCLTALGFLNFENAAPAVIQ.

At Ser53 the chain carries Pyruvic acid (Ser).

This sequence belongs to the pyruvoyl-dependent arginine decarboxylase family. In terms of assembly, trimer of an alpha-beta dimer. The cofactor is pyruvate.

The protein localises to the cytoplasm. The enzyme catalyses L-arginine + H(+) = agmatine + CO2. Functionally, part of the AaxABC system, catalyzes the decarboxylation of L-arginine. The arginine uptake by the bacterium in the macrophage may be a virulence factor against the host innate immune response. In Chlamydia trachomatis serovar L2 (strain ATCC VR-902B / DSM 19102 / 434/Bu), this protein is Pyruvoyl-dependent arginine decarboxylase AaxB (aaxB).